Consider the following 983-residue polypeptide: UPF0182 protein KRH_08700 (983 aa).

Transmembrane regions (helical) follow at residues 22–42, 67–87, 116–136, 172–192, 213–233, 261–281, and 288–308; these read GALL…VGFT, VIGL…LSLW, VVMV…VATQ, LLIG…LLMH, VHLG…FWLD, GILA…GFIG, and IGAA…PWAI. The interval 893-959 is disordered; it reads GAKTDTGAGV…DKAMKDGDWT (67 aa). The segment covering 947 to 959 has biased composition (basic and acidic residues); that stretch reads QDSDKAMKDGDWT.

Belongs to the UPF0182 family.

It localises to the cell membrane. The polypeptide is UPF0182 protein KRH_08700 (Kocuria rhizophila (strain ATCC 9341 / DSM 348 / NBRC 103217 / DC2201)).